The following is a 110-amino-acid chain: METIAKHCHARSSAQKVRLVADLIRGKKVSQALEVLTYTNKKAAGLVKKVLESAIANAEHNDGADIDDLKVAKIFVDEGPSMKRIMPRAKGRADRILKRTSHITVVVSDR.

The protein belongs to the universal ribosomal protein uL22 family. In terms of assembly, part of the 50S ribosomal subunit.

Its function is as follows. This protein binds specifically to 23S rRNA; its binding is stimulated by other ribosomal proteins, e.g. L4, L17, and L20. It is important during the early stages of 50S assembly. It makes multiple contacts with different domains of the 23S rRNA in the assembled 50S subunit and ribosome. In terms of biological role, the globular domain of the protein is located near the polypeptide exit tunnel on the outside of the subunit, while an extended beta-hairpin is found that lines the wall of the exit tunnel in the center of the 70S ribosome. In Pectobacterium atrosepticum (strain SCRI 1043 / ATCC BAA-672) (Erwinia carotovora subsp. atroseptica), this protein is Large ribosomal subunit protein uL22.